Here is a 255-residue protein sequence, read N- to C-terminus: 1-(5-phosphoribosyl)-5-[(5-phosphoribosylamino)methylideneamino] imidazole-4-carboxamide isomerase (255 aa).

Aspartate 8 (proton acceptor) is an active-site residue. Aspartate 129 (proton donor) is an active-site residue.

The protein belongs to the HisA/HisF family.

Its subcellular location is the cytoplasm. It catalyses the reaction 1-(5-phospho-beta-D-ribosyl)-5-[(5-phospho-beta-D-ribosylamino)methylideneamino]imidazole-4-carboxamide = 5-[(5-phospho-1-deoxy-D-ribulos-1-ylimino)methylamino]-1-(5-phospho-beta-D-ribosyl)imidazole-4-carboxamide. Its pathway is amino-acid biosynthesis; L-histidine biosynthesis; L-histidine from 5-phospho-alpha-D-ribose 1-diphosphate: step 4/9. The protein is 1-(5-phosphoribosyl)-5-[(5-phosphoribosylamino)methylideneamino] imidazole-4-carboxamide isomerase of Prochlorococcus marinus (strain MIT 9313).